Consider the following 373-residue polypeptide: Sodium-dependent organic anion transporter (373 aa).

The span at 1–15 (MSTDCAGNSTCPVNS) shows a compositional bias: polar residues. Residues 1–21 (MSTDCAGNSTCPVNSTEEDPP) form a disordered region. Topologically, residues 1-32 (MSTDCAGNSTCPVNSTEEDPPVGMEGHANLKL) are extracellular. Residues Asn-8 and Asn-14 are each glycosylated (N-linked (GlcNAc...) asparagine). The helical transmembrane segment at 33-53 (LFTVLSAVMVGLVMFSFGCSV) threads the bilayer. Topologically, residues 54–67 (ESQKLWLHLRRPWG) are cytoplasmic. Residues 68–88 (IAVGLLSQFGLMPLTAYLLAI) form a helical membrane-spanning segment. Residues 89–97 (GFGLKPFQA) are Extracellular-facing. A helical membrane pass occupies residues 98–118 (IAVLMMGSCPGGTISNVLTFW). Topologically, residues 119–126 (VDGDMDLS) are cytoplasmic. A helical transmembrane segment spans residues 127 to 147 (ISMTTCSTVAALGMMPLCLYI). Topologically, residues 148–157 (YTRSWTLTQN) are extracellular. The helical transmembrane segment at 158-178 (LVIPYQSIGITLVSLVVPVAS) threads the bilayer. Residues 179–195 (GVYVNYRWPKQATVILK) lie on the Cytoplasmic side of the membrane. A helical transmembrane segment spans residues 196–216 (VGAILGGMLLLVVAVTGMVLA). Residues 217-224 (KGWNTDVT) are Extracellular-facing. A helical membrane pass occupies residues 225 to 245 (LLVISCIFPLVGHVTGFLLAF). The Cytoplasmic portion of the chain corresponds to 246 to 265 (LTHQSWQRCRTISIETGAQN). The helical transmembrane segment at 266-283 (IQLCIAMLQLSFSAEYLV) threads the bilayer. A topological domain (extracellular) is located at residue Gln-284. A helical transmembrane segment spans residues 285 to 305 (LLNFALAYGLFQVLHGLLIVA). Residues 306–373 (AYQAYKRRQK…ELTSHIPSCE (68 aa)) lie on the Cytoplasmic side of the membrane.

Belongs to the bile acid:sodium symporter (BASS) (TC 2.A.28) family. Glycosylated. Highest expression in lung and testis, moderate expression in heart, bladder and skin, and low expression in blood, liver, stomach, small intestine, spleen, kidney, adrenal gland, seminal vesicle, preputial gland, coagulating gland, lacrimal gland/eye, and brain.

Its subcellular location is the membrane. It catalyses the reaction estrone 3-sulfate(out) + 2 Na(+)(out) = estrone 3-sulfate(in) + 2 Na(+)(in). The enzyme catalyses 17beta-estradiol 3-sulfate(out) + 2 Na(+)(out) = 17beta-estradiol 3-sulfate(in) + 2 Na(+)(in). The catalysed reaction is dehydroepiandrosterone 3-sulfate(out) + 2 Na(+)(out) = dehydroepiandrosterone 3-sulfate(in) + 2 Na(+)(in). It carries out the reaction androst-5-ene-diol 3-sulfate(out) + 2 Na(+)(out) = androst-5-ene-diol 3-sulfate(in) + 2 Na(+)(in). It catalyses the reaction pregnenolone sulfate(out) + 2 Na(+)(out) = pregnenolone sulfate(in) + 2 Na(+)(in). The enzyme catalyses taurolithocholate 3-sulfate(out) + 2 Na(+)(out) = taurolithocholate 3-sulfate(in) + 2 Na(+)(in). The catalysed reaction is androsterone 3alpha-sulfate(out) + 2 Na(+)(out) = androsterone 3alpha-sulfate(in) + 2 Na(+)(in). It carries out the reaction 5alpha-dihydrotestosterone sulfate(out) + 2 Na(+)(out) = 5alpha-dihydrotestosterone sulfate(in) + 2 Na(+)(in). It catalyses the reaction 17beta-estradiol 17-sulfate(out) + 2 Na(+)(out) = 17beta-estradiol 17-sulfate(in) + 2 Na(+)(in). The enzyme catalyses 17alpha-hydroxypregnenolone 3-sulfate(out) + 2 Na(+)(out) = 17alpha-hydroxypregnenolone 3-sulfate(in) + 2 Na(+)(in). The catalysed reaction is epiandrosterone 3-sulfate(out) + 2 Na(+)(out) = epiandrosterone 3-sulfate(in) + 2 Na(+)(in). It carries out the reaction epitestosterone 17-sulfate(out) + 2 Na(+)(out) = epitestosterone 17-sulfate(in) + 2 Na(+)(in). It catalyses the reaction testosterone 17-sulfate(out) + 2 Na(+)(out) = testosterone 17-sulfate(in) + 2 Na(+)(in). The enzyme catalyses 16alpha-hydroxydehydroepiandrosterone 3-sulfate(out) + 2 Na(+)(out) = 16alpha-hydroxydehydroepiandrosterone 3-sulfate(in) + 2 Na(+)(in). Its function is as follows. Transports sulfoconjugated steroid hormones from the extracellular compartment into the cytosol in a sodium-dependent manner without hydrolysis. Steroid sulfate hormones are commonly considered to be biologically inactive metabolites, that may be activated by steroid sulfatases into free steroids. May play an important role by delivering sulfoconjugated steroids to specific target cells in reproductive organs. May play a role transporting the estriol precursor 16alpha-hydroxydehydroepiandrosterone 3-sulfate (16a-OH-DHEAS) at the fetal blood vessel endothelium. Can also transport other sulfoconjugated molecules such as taurolithocholic acid-3-sulfate and sulfoconjugated pyrenes. The polypeptide is Sodium-dependent organic anion transporter (Slc10a6) (Mus musculus (Mouse)).